We begin with the raw amino-acid sequence, 585 residues long: A-type ATP synthase subunit A (585 aa).

Position 231–238 (231–238) interacts with ATP; it reads GPFGSGKT.

It belongs to the ATPase alpha/beta chains family. In terms of assembly, has multiple subunits with at least A(3), B(3), C, D, E, F, H, I and proteolipid K(x).

The protein resides in the cell membrane. It carries out the reaction ATP + H2O + 4 H(+)(in) = ADP + phosphate + 5 H(+)(out). In terms of biological role, component of the A-type ATP synthase that produces ATP from ADP in the presence of a proton gradient across the membrane. The A chain is the catalytic subunit. The polypeptide is A-type ATP synthase subunit A (Thermococcus sibiricus (strain DSM 12597 / MM 739)).